Reading from the N-terminus, the 712-residue chain is MNNPLVNQAAMVLPVFLLSACLGGGGSFDLDSVDTEAPRPAPKYQDVFSEKPQAQKDQGGYGFAMRLKRRNWYPQAKEDEVKLDESDWEATGLPDEPKELPKRQKSVIEKVETDSDNNIYSSPYLKPSNHQNGNTGNGINQPKNQAKDYENFKYVYSGWFYKHAKREFNLKVEPKSAKNGDDGYIFYHGKEPSRQLPASGKITYKGVWHFATDTKKGQKFREIIQPSKSQGDRYSGFSGDDGEEYSNKNKSTLTDGQEGYGFTSNLEVDFHNKKLTGKLIRNNANTDNNQATTTQYYSLEAQVTGNRFNGKATATDKPQQNSETKEHPFVSDSSSLSGGFFGPQGEELGFRFLSDDQKVAVVGSAKTKDKPANGNTAAASGGTDAAASNGAAGTSSENGKLTTVLDAVELKLGDKEVQKLDNFSNAAQLVVDGIMIPLLPEASESGNNQANQGTNGGTAFTRKFDHTPESDKKDAQAGTQTNGAQTASNTAGDTNGKTKTYEVEVCCSNLNYLKYGMLTRKNSKSAMQAGESSSQADAKTEQVEQSMFLQGERTDEKEIPSEQNIVYRGSWYGYIANDKSTSWSGNASNATSGNRAEFTVNFADKKITGTLTADNRQEATFTIDGNIKDNGFEGTAKTAESGFDLDQSNTTRTPKAYITDAKVQGGFYGPKAEELGGWFAYPGDKQTKNATNASGNSSATVVFGAKRQQPVR.

The N-terminal stretch at 1 to 20 is a signal peptide; that stretch reads MNNPLVNQAAMVLPVFLLSA. C21 is lipidated: N-palmitoyl cysteine. A lipid anchor (S-diacylglycerol cysteine) is attached at C21. Residues 59–196 form an N-terminal handle domain region; that stretch reads GGYGFAMRLK…YHGKEPSRQL (138 aa). Disordered stretches follow at residues 78 to 104, 123 to 144, 223 to 256, 309 to 338, 364 to 398, 442 to 495, and 689 to 712; these read EDEV…PKRQ, PYLK…QPKN, IIQP…LTDG, NGKA…SLSG, SAKT…SSEN, ASES…GDTN, and NATN…QPVR. Residues 95–104 are compositionally biased toward basic and acidic residues; it reads DEPKELPKRQ. Residues 128–144 show a composition bias toward polar residues; that stretch reads SNHQNGNTGNGINQPKN. Positions 197–367 are N-terminal beta barrel domain; sequence PASGKITYKG…KVAVVGSAKT (171 aa). Low complexity-rich tracts occupy residues 372 to 398 and 446 to 459; these read ANGN…SSEN and GNNQ…GGTA. The C-terminal handle domain stretch occupies residues 389–555; it reads NGAAGTSSEN…SMFLQGERTD (167 aa). Residues 462–475 show a composition bias toward basic and acidic residues; the sequence is RKFDHTPESDKKDA. Polar residues-rich tracts occupy residues 477–495 and 689–700; these read AGTQ…GDTN and NATNASGNSSAT. The segment at 556-712 is C-terminal beta barrel domain; the sequence is EKEIPSEQNI…FGAKRQQPVR (157 aa).

The protein belongs to the TbpB family. Isotype II subfamily. As to quaternary structure, binds only human holo-transferrin (TF), via the TF C-terminus. Forms a large complex with TF and TbpA. Interacts via its C-terminal domain with Slam1.

It is found in the cell outer membrane. It localises to the cell surface. Neisseria acquires iron by extracting it from serum transferrin (TF) in its human host. Acts as a TF receptor and is required for TF utilization. Involved in the initial capture of TF. Helps select only those TF molecules that can be used as an iron source and concentrates them on the cell surface, maintaining the iron-loaded status of the TF C-terminal lobe until its delivery to TbpA. The chain is Transferrin-binding protein B from Neisseria meningitidis serogroup B (strain ATCC BAA-335 / MC58).